A 459-amino-acid chain; its full sequence is uncharacterized protein (459 aa).

It belongs to the Rab GDI family.

The protein resides in the cytoplasm. Its subcellular location is the nucleus. This is an uncharacterized protein from Schizosaccharomyces pombe (strain 972 / ATCC 24843) (Fission yeast).